The chain runs to 243 residues: Phosphoribosyl isomerase A (243 aa).

Residue D9 is the Proton acceptor of the active site. D128 acts as the Proton donor in catalysis.

Belongs to the HisA/HisF family.

Its subcellular location is the cytoplasm. The catalysed reaction is 1-(5-phospho-beta-D-ribosyl)-5-[(5-phospho-beta-D-ribosylamino)methylideneamino]imidazole-4-carboxamide = 5-[(5-phospho-1-deoxy-D-ribulos-1-ylimino)methylamino]-1-(5-phospho-beta-D-ribosyl)imidazole-4-carboxamide. It catalyses the reaction N-(5-phospho-beta-D-ribosyl)anthranilate = 1-(2-carboxyphenylamino)-1-deoxy-D-ribulose 5-phosphate. Its pathway is amino-acid biosynthesis; L-histidine biosynthesis; L-histidine from 5-phospho-alpha-D-ribose 1-diphosphate: step 4/9. It participates in amino-acid biosynthesis; L-tryptophan biosynthesis; L-tryptophan from chorismate: step 3/5. Its function is as follows. Involved in both the histidine and tryptophan biosynthetic pathways. The polypeptide is Phosphoribosyl isomerase A (Mycolicibacterium paratuberculosis (strain ATCC BAA-968 / K-10) (Mycobacterium paratuberculosis)).